The sequence spans 1588 residues: uncharacterized protein (1588 aa).

The segment covering 486-495 has biased composition (basic and acidic residues); sequence RKRLTSKTED. Disordered regions lie at residues 486–515 and 1146–1176; these read RKRLTSKTEDDQNQWTRDCQNSGEDKKRRP and GGQDNVSDQSENQSENQSLESETSPIVRELN. The segment covering 498–507 has biased composition (polar residues); the sequence is NQWTRDCQNS. Positions 1150–1169 are enriched in low complexity; it reads NVSDQSENQSENQSLESETS.

Its subcellular location is the virion. This is an uncharacterized protein from Acanthamoeba polyphaga (Amoeba).